We begin with the raw amino-acid sequence, 84 residues long: Cytochrome b559 subunit alpha (84 aa).

The chain crosses the membrane as a helical span at residues 22-36 (IIHSITIPSLFVAGF). His24 serves as a coordination point for heme.

Belongs to the PsbE/PsbF family. Heterodimer of an alpha subunit and a beta subunit. PSII is composed of 1 copy each of membrane proteins PsbA, PsbB, PsbC, PsbD, PsbE, PsbF, PsbH, PsbI, PsbJ, PsbK, PsbL, PsbM, PsbT, PsbX, PsbY, PsbZ, Psb30/Ycf12, at least 3 peripheral proteins of the oxygen-evolving complex and a large number of cofactors. It forms dimeric complexes. Heme b serves as cofactor.

The protein localises to the plastid. It is found in the chloroplast thylakoid membrane. Its function is as follows. This b-type cytochrome is tightly associated with the reaction center of photosystem II (PSII). PSII is a light-driven water:plastoquinone oxidoreductase that uses light energy to abstract electrons from H(2)O, generating O(2) and a proton gradient subsequently used for ATP formation. It consists of a core antenna complex that captures photons, and an electron transfer chain that converts photonic excitation into a charge separation. The sequence is that of Cytochrome b559 subunit alpha from Emiliania huxleyi (Coccolithophore).